We begin with the raw amino-acid sequence, 449 residues long: Chromosomal replication initiator protein DnaA (449 aa).

The domain I, interacts with DnaA modulators stretch occupies residues Met1–Lys73. Positions Lys73–Ser110 are domain II. The tract at residues Thr111–Ser327 is domain III, AAA+ region. 4 residues coordinate ATP: Gly155, Gly157, Lys158, and Thr159. The interval Ser328–Asn449 is domain IV, binds dsDNA.

This sequence belongs to the DnaA family. In terms of assembly, oligomerizes as a right-handed, spiral filament on DNA at oriC.

It is found in the cytoplasm. Plays an essential role in the initiation and regulation of chromosomal replication. ATP-DnaA binds to the origin of replication (oriC) to initiate formation of the DNA replication initiation complex once per cell cycle. Binds the DnaA box (a 9 base pair repeat at the origin) and separates the double-stranded (ds)DNA. Forms a right-handed helical filament on oriC DNA; dsDNA binds to the exterior of the filament while single-stranded (ss)DNA is stabiized in the filament's interior. The ATP-DnaA-oriC complex binds and stabilizes one strand of the AT-rich DNA unwinding element (DUE), permitting loading of DNA polymerase. After initiation quickly degrades to an ADP-DnaA complex that is not apt for DNA replication. Binds acidic phospholipids. This is Chromosomal replication initiator protein DnaA from Clostridium beijerinckii (strain ATCC 51743 / NCIMB 8052) (Clostridium acetobutylicum).